The sequence spans 236 residues: N-acetyl-alpha-D-glucosaminyl L-malate deacetylase 1 (236 aa).

3 residues coordinate Zn(2+): His12, Asp15, and His113.

Belongs to the PIGL family. Requires Zn(2+) as cofactor.

The catalysed reaction is (S)-malyl N-acetyl-alpha-D-glucosaminide + H2O = (S)-malyl alpha-D-glucosaminide + acetate. In terms of biological role, involved in bacillithiol (BSH) biosynthesis. Catalyzes the second step of the pathway, the deacetylation of N-acetylglucosaminylmalate (GlcNAc-Mal) to glucosamine malate (GlcN-Mal). This Bacillus subtilis (strain 168) protein is N-acetyl-alpha-D-glucosaminyl L-malate deacetylase 1.